Consider the following 227-residue polypeptide: 2,3-bisphosphoglycerate-dependent phosphoglycerate mutase (227 aa).

Substrate-binding positions include 7 to 14 (RHGQSEWN), 20 to 21 (TG), Arg59, 86 to 89 (ERHY), Lys97, 113 to 114 (RR), and 182 to 183 (GN). Residue His8 is the Tele-phosphohistidine intermediate of the active site. Glu86 (proton donor/acceptor) is an active-site residue.

Belongs to the phosphoglycerate mutase family. BPG-dependent PGAM subfamily. As to quaternary structure, homodimer.

The enzyme catalyses (2R)-2-phosphoglycerate = (2R)-3-phosphoglycerate. The protein operates within carbohydrate degradation; glycolysis; pyruvate from D-glyceraldehyde 3-phosphate: step 3/5. In terms of biological role, catalyzes the interconversion of 2-phosphoglycerate and 3-phosphoglycerate. In Neisseria meningitidis serogroup A / serotype 4A (strain DSM 15465 / Z2491), this protein is 2,3-bisphosphoglycerate-dependent phosphoglycerate mutase.